We begin with the raw amino-acid sequence, 224 residues long: MSVKEWPVSERPREKLQTQGAEYLSDAELLAILLGSGSGGQDVVSFARRLLSDFGGVGALLTATPEQLLACNGIGPARVNQLRVVLELSRRYLKWQLERSDGFTEPTMVKDYLTSQLRHQGREVFAILLLDSQHRLLRYEELFQGTINAAPVYPREVIKLVMQYNAAAVILAHNHPSGVAEPSQADQRVTERVKKALTLIDVALLDHFVVGAGDPISFAERGLL.

Residues 102-224 (GFTEPTMVKD…PISFAERGLL (123 aa)) form the MPN domain. Positions 173, 175, and 186 each coordinate Zn(2+). The JAMM motif motif lies at 173–186 (HNHPSGVAEPSQAD).

This sequence belongs to the UPF0758 family.

The sequence is that of UPF0758 protein IL0240 from Idiomarina loihiensis (strain ATCC BAA-735 / DSM 15497 / L2-TR).